We begin with the raw amino-acid sequence, 101 residues long: Small ribosomal subunit protein uS14 (101 aa).

Belongs to the universal ribosomal protein uS14 family. As to quaternary structure, part of the 30S ribosomal subunit. Contacts proteins S3 and S10.

Its function is as follows. Binds 16S rRNA, required for the assembly of 30S particles and may also be responsible for determining the conformation of the 16S rRNA at the A site. The polypeptide is Small ribosomal subunit protein uS14 (Francisella philomiragia subsp. philomiragia (strain ATCC 25017 / CCUG 19701 / FSC 153 / O#319-036)).